We begin with the raw amino-acid sequence, 910 residues long: Epithelial discoidin domain-containing receptor 1 (910 aa).

Residues 1 to 19 (MGTGTLSSLLLLLLLVTIG) form the signal peptide. Topologically, residues 22–414 (DMKGHFDPAK…VAKAEGSPTA (393 aa)) are extracellular. The 155-residue stretch at 32 to 186 (CRYALGMQDR…VCLRVELYGC (155 aa)) folds into the F5/8 type C domain. Cystine bridges form between Cys-32–Cys-186 and Cys-75–Cys-178. Residues 193 to 368 (LSYTAPVGQT…LFSEISFISD (176 aa)) are DS-like domain. Asn-212, Gln-231, Asp-234, Val-236, Tyr-254, and Tyr-256 together coordinate Ca(2+). The N-linked (GlcNAc...) asparagine glycan is linked to Asn-212. Asn-261 carries N-linked (GlcNAc...) asparagine glycosylation. A disulfide bridge connects residues Cys-304 and Cys-349. The Ca(2+) site is built by Ser-361 and Glu-362. 2 N-linked (GlcNAc...) asparagine glycosylation sites follow: Asn-371 and Asn-391. A helical membrane pass occupies residues 415–435 (ILIGCLVAIILLLLLIIALML). Topologically, residues 436-910 (WRLHWRRLLS…FLADDALNTV (475 aa)) are cytoplasmic. Residues 467–494 (ILINNRPGPREPPPYQEPRPRGTPTHSA) form a disordered region. Positions 478 to 481 (PPPY) match the PPxY motif motif. 3 positions are modified to phosphotyrosine; by autocatalysis: Tyr-481, Tyr-510, and Tyr-517. The Protein kinase domain maps to 607–902 (LRFKEKLGEG…PPFSQLHRFL (296 aa)). ATP is bound by residues 613–621 (LGEGQFGEV) and Lys-652. Tyr-737 is subject to Phosphotyrosine; by autocatalysis. Residue Asp-763 is the Proton acceptor of the active site. 3 positions are modified to phosphotyrosine; by autocatalysis: Tyr-789, Tyr-793, and Tyr-794.

It belongs to the protein kinase superfamily. Tyr protein kinase family. Insulin receptor subfamily. As to quaternary structure, homodimer. Interacts (via PPxY motif) with WWC1 (via WW domains) in a collagen-regulated manner. Forms a tripartite complex with WWC1 and PRKCZ, but predominantly in the absence of collagen. Interacts (tyrosine phosphorylated) with SHC1. Interacts with SRC. Interacts with MYH9. Interacts with CDH1. Interacts with PTPN11. Interacts with NCK2. Autophosphorylated in response to fibrillar collagen binding. Various embryonic and adult tissues; also proliferative zones of the developing brain; hippocampal neurons.

The protein localises to the cell membrane. It carries out the reaction L-tyrosyl-[protein] + ATP = O-phospho-L-tyrosyl-[protein] + ADP + H(+). In terms of biological role, tyrosine kinase that functions as a cell surface receptor for fibrillar collagen and regulates cell attachment to the extracellular matrix, remodeling of the extracellular matrix, cell migration, differentiation, survival and cell proliferation. Collagen binding triggers a signaling pathway that involves SRC and leads to the activation of MAP kinases. Regulates remodeling of the extracellular matrix by up-regulation of the matrix metalloproteinases MMP2, MMP7 and MMP9, and thereby facilitates cell migration and wound healing. Promotes smooth muscle cell migration, and thereby contributes to arterial wound healing. Also plays a role in tumor cell invasion. Phosphorylates PTPN11. Required for normal blastocyst implantation during pregnancy, for normal mammary gland differentiation and normal lactation. Required for normal ear morphology and normal hearing. The chain is Epithelial discoidin domain-containing receptor 1 (Ddr1) from Rattus norvegicus (Rat).